The sequence spans 490 residues: JNK-interacting protein 1 (490 aa).

2 disordered regions span residues Met1 to Pro71 and Glu213 to Gln254. The segment covering Gly231–Thr249 has biased composition (polar residues). The SH3 domain maps to Met271 to Tyr332. A PID domain is found at Lys344 to Glu479.

This sequence belongs to the JIP scaffold family. As to quaternary structure, forms homo- and heterooligomeric complexes. Binds Hep, a dual specificity protein kinase in the JNK pathway, but not its downstream target bsk. The C-terminal region interacts with the kinesin light chain protein, Klc, and the C-terminal PTY motif of amyloid-beta protein precursor-like protein, Appl. As to expression, expressed in the brain, CNS, PNS and cells posterior to the morphogenetic furrow in the eye imaginal disk of late embryos.

The protein localises to the cytoplasm. Functionally, the JNK-interacting protein (JIP) group of scaffold proteins selectively mediates JNK signaling by aggregating specific components of the MAPK cascade to form a functional JNK signaling module. May function as a regulator of vesicle transport, through interactions with the JNK-signaling components and motor proteins. The chain is JNK-interacting protein 1 (Aplip1) from Drosophila melanogaster (Fruit fly).